The sequence spans 21 residues: Formate ester dehydrogenase beta chain (21 aa).

Heterotrimer composed of an alpha, a beta and a gamma chain.

The sequence is that of Formate ester dehydrogenase beta chain from Amycolatopsis methanolica.